Here is a 565-residue protein sequence, read N- to C-terminus: Mitochondrial distribution and morphology protein 34 (565 aa).

The 195-residue stretch at Met1–Leu195 folds into the SMP-LTD domain. Disordered regions lie at residues Glu207–Leu236, Pro296–Thr317, and Ser348–Pro504. Residues Arg358–Arg370 show a composition bias toward basic residues. A compositionally biased stretch (basic and acidic residues) spans Val371–Glu381. Positions Ser382–Ser401 are enriched in polar residues. 2 stretches are compositionally biased toward basic and acidic residues: residues Leu446 to Val472 and Ile483 to Glu496.

It belongs to the MDM34 family. As to quaternary structure, component of the ER-mitochondria encounter structure (ERMES) or MDM complex, composed of mmm1, mdm10, mdm12 and mdm34.

The protein resides in the mitochondrion outer membrane. Its function is as follows. Component of the ERMES/MDM complex, which serves as a molecular tether to connect the endoplasmic reticulum (ER) and mitochondria. Components of this complex are involved in the control of mitochondrial shape and protein biogenesis, and function in nonvesicular lipid trafficking between the ER and mitochondria. Mdm34 is required for the interaction of the ER-resident membrane protein mmm1 and the outer mitochondrial membrane-resident beta-barrel protein mdm10. The sequence is that of Mitochondrial distribution and morphology protein 34 from Aspergillus terreus (strain NIH 2624 / FGSC A1156).